The following is a 497-amino-acid chain: MDMHCKADPFSAMHPGHGGVNQLGGVFVNGRPLPDVVRQRIVELAHQGVRPCDISRQLRVSHGCVSKILGRYYETGSIKPGVIGGSKPKVATPKVVDKIAEYKRQNPTMFAWEIRDRLLAEGICDNDTVPSVSSINRIIRTKVQQPFHPTPDGSGTPVGTPGHTLVPSTASPPVSSASNDPVGSYSINGILGIPRSNGEKRKRDEDGSDGSGPNGDSQSSVESLRKHLRADNFTQQQLEALDRVFERPSYPDVFQTAEHIKSEQASEYSLPALTPGLDEVKSSLSASGNADLGSNVSGPQSYPVVTESFASHLYVKQEPHEASLTPFTPSSLASSGLADIQPFQMALTVDASTPTYSSFTHHGPHYGQFGSQPLIAGRDMSSTTLPGYPPHVPPTGQGSYPTSTLAGMVPGTNVSVHHSVQPVECCSCLSSSKPCLFHCRTGSGSEFSGNPYSHPQYTTYNEAWRFSNPALLSSPYYYSATSRGSAPPTAATAYDRH.

The paired DNA-binding region spans 16 to 142 (GHGGVNQLGG…SSINRIIRTK (127 aa)). Residues 19 to 75 (GVNQLGGVFVNGRPLPDVVRQRIVELAHQGVRPCDISRQLRVSHGCVSKILGRYYET) are PAI subdomain. The tract at residues 94 to 142 (KVVDKIAEYKRQNPTMFAWEIRDRLLAEGICDNDTVPSVSSINRIIRTK) is RED subdomain. The disordered stretch occupies residues 143–224 (VQQPFHPTPD…GDSQSSVESL (82 aa)). Residues 166–178 (VPSTASPPVSSAS) are compositionally biased toward low complexity.

Expression becomes spatially localized at mid-gastrula stages and is confined to the nervous system (midbrain, hindbrain, spinal cord), sensory organs (optic vesicle and stalk, otic vesicle), visceral arches, developing excretory system (pronephros, pronephric duct, rectal diverticulum, proctodaeum) and thyroid gland. Splicing does not appear to be tissue-specific and tissues displayed the same spectrum of splice variants.

It is found in the nucleus. Functionally, probable transcription factor. Involved in kidney development, acting synergistically with lhx1/lim-1 in pronephric morphogenesis during the tailbud stages. This Xenopus laevis (African clawed frog) protein is Paired box protein Pax-2-A (pax2-a).